Here is a 701-residue protein sequence, read N- to C-terminus: Sulfate anion transporter 1 (701 aa).

A disordered region spans residues 1 to 20 (MDESPEPLQQGRGPVPVRRQ). Helical transmembrane passes span 68-90 (YLAGDVMSGLVIGIILVPQAIAY) and 94-116 (AGLQPIYSLYTSFFANLIYFLMG). N158 and N163 each carry an N-linked (GlcNAc...) asparagine glycan. Helical transmembrane passes span 176–198 (YAIRVATALTLMTGLYQVLMGVL), 255–277 (GAGQANVCDVVTSTVCLAVLLAA), 290–309 (VPLPTELLVIVVATLVSHFG), 342–364 (ALDAVALALVAAAFSISLAEMFA), 377–399 (LLAVGCCNVLPAFLHCFATSAAL), 412–434 (TQLSSVVSATVVLLVLLALAPLF), and 472–494 (LVWAGTAATCMLVSTEAGLLAGV). The region spanning 527-687 (EFEGLVPEPG…LSVHDAVQTA (161 aa)) is the STAS domain.

Belongs to the SLC26A/SulP transporter (TC 2.A.53) family. In terms of tissue distribution, expressed most abundantly in the kidney and liver, with lower levels in the pancreas, testis, brain, small intestine, colon, and lung.

The protein resides in the cell membrane. The protein localises to the basolateral cell membrane. The catalysed reaction is thiosulfate(in) + sulfate(out) = thiosulfate(out) + sulfate(in). It catalyses the reaction 2 hydrogencarbonate(out) + sulfate(in) = 2 hydrogencarbonate(in) + sulfate(out). It carries out the reaction oxalate(in) + sulfate(out) = oxalate(out) + sulfate(in). The enzyme catalyses oxalate(in) + 2 hydrogencarbonate(out) = oxalate(out) + 2 hydrogencarbonate(in). Functionally, sodium-independent sulfate anion transporter. Can transport other anions including bicarbonate, thiosulfate and oxalate by mediating sulfate-thiosulfate, sulfate-hydrogencarbonate and sulfate-oxalate anion exchange. Mediates oxalate-hydrogencarbonate anion exchange. In Homo sapiens (Human), this protein is Sulfate anion transporter 1 (SLC26A1).